A 212-amino-acid chain; its full sequence is ATP phosphoribosyltransferase (212 aa).

Belongs to the ATP phosphoribosyltransferase family. Short subfamily. In terms of assembly, heteromultimer composed of HisG and HisZ subunits.

The protein resides in the cytoplasm. The enzyme catalyses 1-(5-phospho-beta-D-ribosyl)-ATP + diphosphate = 5-phospho-alpha-D-ribose 1-diphosphate + ATP. It participates in amino-acid biosynthesis; L-histidine biosynthesis; L-histidine from 5-phospho-alpha-D-ribose 1-diphosphate: step 1/9. Its function is as follows. Catalyzes the condensation of ATP and 5-phosphoribose 1-diphosphate to form N'-(5'-phosphoribosyl)-ATP (PR-ATP). Has a crucial role in the pathway because the rate of histidine biosynthesis seems to be controlled primarily by regulation of HisG enzymatic activity. The chain is ATP phosphoribosyltransferase from Geobacter metallireducens (strain ATCC 53774 / DSM 7210 / GS-15).